The following is a 1240-amino-acid chain: Pectate lyase L (1240 aa).

The signal sequence occupies residues Met1–Ala26. 2 has catalytic activity regions span residues Glu27–Arg551 and Thr545–Lys1240. The Ca(2+) site is built by Asp325, Glu349, Asp350, Asp1049, Asp1073, Asp1074, and Asp1077. Lys1117 functions as the Proton acceptor in the catalytic mechanism.

This sequence belongs to the polysaccharide lyase 9 family. Ca(2+) is required as a cofactor.

The protein localises to the secreted. The catalysed reaction is Eliminative cleavage of (1-&gt;4)-alpha-D-galacturonan to give oligosaccharides with 4-deoxy-alpha-D-galact-4-enuronosyl groups at their non-reducing ends.. Its activity is regulated as follows. Inhibited by the metal chelator ethylenediaminetetraacetic acid (EDTA). Its function is as follows. Cleaves polygalacturonate or partially methylated pectin. When assayed on polygalacturonate or on pectin, it releases monogalacturonate as the principal product. This is Pectate lyase L from Thermoclostridium stercorarium (Clostridium stercorarium).